The sequence spans 70 residues: Melittin (70 aa).

The first 21 residues, M1–A21, serve as a signal peptide directing secretion. Residues A22–A43 constitute a propeptide, removed by a dipeptidylpeptidase. An N-formylglycine; partial modification is found at G44. Q69 is modified (glutamine amide).

This sequence belongs to the melittin family. As to quaternary structure, monomer (in solution and for integration into membranes), homotetramer (in solution and potentially as a toroidal pore in membranes), and potenially homomultimer (as a toroidal pore in membranes). As to expression, expressed by the venom gland.

Its subcellular location is the secreted. It localises to the target cell membrane. In terms of biological role, main toxin of bee venom with strong hemolytic activity and antimicrobial activity. It has enhancing effects on bee venom phospholipase A2 activity. This amphipathic toxin binds to negatively charged membrane surface and forms pore by inserting into lipid bilayers inducing the leakage of ions and molecules and the enhancement of permeability that ultimately leads to cell lysis. It acts as a voltage-gated pore with higher selectivity for anions over cations. The ion conductance has been shown to be voltage-dependent. Self-association of melittin in membranes is promoted by high ionic strength, but not by the presence of negatively charged lipids. In vivo, intradermal injection into healthy human volunteers produce sharp pain sensation and an inflammatory response. It produces pain by activating primary nociceptor cells directly and indirectly due to its ability to activate plasma membrane phospholipase A2 and its pore-forming activity. In Polistes hebraeus (Paper wasp), this protein is Melittin (MELT).